We begin with the raw amino-acid sequence, 568 residues long: Probable pectinesterase/pectinesterase inhibitor 23 (568 aa).

The signal sequence occupies residues 1 to 33 (MGSDGDKKKKFIVAGSVSGFLVIMVVSVAVVTS). Positions 45-198 (RKTTKAVQAV…RELSSNSLAM (154 aa)) are pectinesterase inhibitor 23. 3 N-linked (GlcNAc...) asparagine glycosylation sites follow: Asn94, Asn210, and Asn316. The pectinesterase 23 stretch occupies residues 251–548 (PGPVKANAVV…PQDALLYTGD (298 aa)). Thr333 and Gln363 together coordinate substrate. Asp386 serves as the catalytic Proton donor; for pectinesterase activity. Cys400 and Cys420 are disulfide-bonded. Asp407 acts as the Nucleophile; for pectinesterase activity in catalysis. Arg475 and Trp477 together coordinate substrate.

The protein in the N-terminal section; belongs to the PMEI family. It in the C-terminal section; belongs to the pectinesterase family. Expressed in mature pollen grains in the anthers and on the stigma. Found in pollen tubes within the style.

The protein localises to the secreted. Its subcellular location is the cell wall. The enzyme catalyses [(1-&gt;4)-alpha-D-galacturonosyl methyl ester](n) + n H2O = [(1-&gt;4)-alpha-D-galacturonosyl](n) + n methanol + n H(+). The protein operates within glycan metabolism; pectin degradation; 2-dehydro-3-deoxy-D-gluconate from pectin: step 1/5. Functionally, acts in the modification of cell walls via demethylesterification of cell wall pectin. In Arabidopsis thaliana (Mouse-ear cress), this protein is Probable pectinesterase/pectinesterase inhibitor 23 (PME23).